A 153-amino-acid chain; its full sequence is 3-hydroxyacyl-[acyl-carrier-protein] dehydratase FabZ (153 aa).

Residue histidine 59 is part of the active site.

The protein belongs to the thioester dehydratase family. FabZ subfamily.

The protein localises to the cytoplasm. It carries out the reaction a (3R)-hydroxyacyl-[ACP] = a (2E)-enoyl-[ACP] + H2O. Functionally, involved in unsaturated fatty acids biosynthesis. Catalyzes the dehydration of short chain beta-hydroxyacyl-ACPs and long chain saturated and unsaturated beta-hydroxyacyl-ACPs. The polypeptide is 3-hydroxyacyl-[acyl-carrier-protein] dehydratase FabZ (Thermosynechococcus vestitus (strain NIES-2133 / IAM M-273 / BP-1)).